Reading from the N-terminus, the 644-residue chain is uncharacterized protein (644 aa).

An ATP-binding site is contributed by 254–261; it reads GKMGAGKS.

This is an uncharacterized protein from Bacillus anthracis.